The sequence spans 367 residues: Alanine racemase (367 aa).

The active-site Proton acceptor; specific for D-alanine is K40. K40 is modified (N6-(pyridoxal phosphate)lysine). R136 contributes to the substrate binding site. Y263 serves as the catalytic Proton acceptor; specific for L-alanine. Position 310 (M310) interacts with substrate.

It belongs to the alanine racemase family. Requires pyridoxal 5'-phosphate as cofactor.

The catalysed reaction is L-alanine = D-alanine. The protein operates within amino-acid biosynthesis; D-alanine biosynthesis; D-alanine from L-alanine: step 1/1. Catalyzes the interconversion of L-alanine and D-alanine. May also act on other amino acids. The polypeptide is Alanine racemase (alr) (Streptococcus pneumoniae (strain ATCC 700669 / Spain 23F-1)).